Consider the following 473-residue polypeptide: Microtubule-binding protein TANGLED (473 aa).

The interval 1-132 (MVARTPQKQR…VTRDIVDAIA (132 aa)) is required for binding to TAN and location to the cortical division sites (CDS) during cytokinesis. Disordered regions lie at residues 131 to 218 (IAPK…ENSF) and 290 to 354 (ASKF…LSTA). 2 stretches are compositionally biased toward polar residues: residues 205 to 216 (ISPQVKGNNGEN) and 307 to 329 (PTRNGSNSVRKSPRGSRSPTRTV).

In terms of assembly, interacts with POK1. As to expression, strongly expressed in flower buds and root tips.

It is found in the nucleus. The protein localises to the nucleolus. The protein resides in the cytoplasm. It localises to the cytoskeleton. Its subcellular location is the phragmoplast. Functionally, is required for spatial control cell division during plant development. Through an association with microtubules, acts both for the positioning of cytoskeletal arrays that establish planes of cell division during prophase and for spatial guidance of expanding phragmoplasts toward preestablished cortical division sites (CDS) during cytokinesis. This chain is Microtubule-binding protein TANGLED (TAN), found in Arabidopsis thaliana (Mouse-ear cress).